The following is a 142-amino-acid chain: 3-hydroxyacyl-[acyl-carrier-protein] dehydratase FabZ (142 aa).

H48 is a catalytic residue.

It belongs to the thioester dehydratase family. FabZ subfamily.

It localises to the cytoplasm. The catalysed reaction is a (3R)-hydroxyacyl-[ACP] = a (2E)-enoyl-[ACP] + H2O. Its function is as follows. Involved in unsaturated fatty acids biosynthesis. Catalyzes the dehydration of short chain beta-hydroxyacyl-ACPs and long chain saturated and unsaturated beta-hydroxyacyl-ACPs. The sequence is that of 3-hydroxyacyl-[acyl-carrier-protein] dehydratase FabZ from Prochlorococcus marinus (strain MIT 9313).